The following is a 651-amino-acid chain: Carboxypeptidase S1 homolog A (651 aa).

An N-terminal signal peptide occupies residues 1 to 19 (MHLATGLAVALPFIGAASA). An intrachain disulfide couples Cys-50 to Cys-121. Asn-77, Asn-125, Asn-128, Asn-161, Asn-184, and Asn-202 each carry an N-linked (GlcNAc...) asparagine glycan. Residue Ser-238 is part of the active site. Residues Asn-260, Asn-299, Asn-308, Asn-347, and Asn-410 are each glycosylated (N-linked (GlcNAc...) asparagine). 2 disulfide bridges follow: Cys-325-Cys-361 and Cys-332-Cys-354. The active site involves Asp-458. Cys-461 contacts substrate. N-linked (GlcNAc...) asparagine glycosylation is found at Asn-474 and Asn-504. Residue His-515 is part of the active site. Glu-516 contacts substrate. The disordered stretch occupies residues 604-630 (KSPAGKKQGPPPTSTSPPSPTSSSEGS). The span at 612 to 623 (GPPPTSTSPPSP) shows a compositional bias: pro residues. A lipid anchor (GPI-anchor amidated serine) is attached at Ser-625. A propeptide spans 626–651 (SSEGSVKEFSVSVLGVSVLAAITFFL) (removed in mature form).

This sequence belongs to the peptidase S10 family.

It localises to the cell membrane. It carries out the reaction Preferential release of a C-terminal arginine or lysine residue.. Functionally, extracellular serine carboxypeptidase that contributes to pathogenicity. This is Carboxypeptidase S1 homolog A (SCPA) from Arthroderma otae (strain ATCC MYA-4605 / CBS 113480) (Microsporum canis).